The following is a 186-amino-acid chain: UPF0200 protein Hbut_0338 (186 aa).

13–20 contributes to the ATP binding site; the sequence is GMPGSGKS.

Belongs to the UPF0200 family.

The polypeptide is UPF0200 protein Hbut_0338 (Hyperthermus butylicus (strain DSM 5456 / JCM 9403 / PLM1-5)).